We begin with the raw amino-acid sequence, 984 residues long: uncharacterized protein (984 aa).

This is an uncharacterized protein from Ostreid herpesvirus 1 (isolate France) (OsHV-1).